The chain runs to 745 residues: Centromere protein I (745 aa).

The span at 1 to 27 (MATPRLTRNSQQQNRISQGSNSRQTTL) shows a compositional bias: polar residues. A disordered region spans residues 1-58 (MATPRLTRNSQQQNRISQGSNSRQTTLLDWKVKDKAGNSKSVLEESSSLEDSNHADDQ). Positions 39–50 (SKSVLEESSSLE) are enriched in low complexity.

The protein belongs to the CENP-I/CTF3 family. As to quaternary structure, component of the CENPA-CAD complex, composed of CENPI, CENPK, CENPL, CENPO, CENPP, CENPQ, CENPR and CENPS. The CENPA-CAD complex interacts with the CENPA-NAC complex, at least composed of CENPA, CENPC, CENPH, CENPM, CENPN, CENPT and CENPU. Interacts with SENP6. Post-translationally, sumoylated. Sumoylated form can be polyubiquitinated by RNF4, leading to its degradation. Desumoylation by SENP6 prevents its degradation. In terms of tissue distribution, highly expressed in testis, ovary and spleen. A much lower mRNA level is found in brain and lung, and no expression is detected in liver, kidney, heart, muscle, pituitary gland, prostate, epididymis and seminal vesicle.

The protein localises to the nucleus. It is found in the chromosome. The protein resides in the centromere. Its function is as follows. Component of the CENPA-CAD (nucleosome distal) complex, a complex recruited to centromeres which is involved in assembly of kinetochore proteins, mitotic progression and chromosome segregation. May be involved in incorporation of newly synthesized CENPA into centromeres via its interaction with the CENPA-NAC complex. Required for the localization of CENPF, MAD1L1 and MAD2 (MAD2L1 or MAD2L2) to kinetochores. Involved in the response of gonadal tissues to follicle-stimulating hormone. The protein is Centromere protein I (Cenpi) of Rattus norvegicus (Rat).